The following is a 33-amino-acid chain: Protein YtiC (33 aa).

Residues 10-29 (FDMLSIYIIYKLIVSNNTWL) form a helical membrane-spanning segment.

It is found in the cell inner membrane. This is Protein YtiC from Escherichia coli (strain K12).